The chain runs to 191 residues: MKSLKGSRTEKNILTAFAGESQARNRYNYFGGQAKKDGFVQISDIFAETADQEREHAKRLFKFLEGGDLEIVAAFPAGIIADTHANLIASAAGEHHEYTEMYPSFARIAREEGYEEIARVFASIAVAEEFHEKRFLDFARNIKEGRVFLREQATKWRCRNCGYVHEGTGAPELCPACAHPKAHFELLGINW.

A Ferritin-like diiron domain is found at 1-146 (MKSLKGSRTE…DFARNIKEGR (146 aa)). Fe(3+) is bound by residues Glu20, Glu53, Glu94, Glu97, Glu128, His131, Cys158, Cys161, Cys174, and Cys177. The 39-residue stretch at 153–191 (ATKWRCRNCGYVHEGTGAPELCPACAHPKAHFELLGINW) folds into the Rubredoxin-like domain.

In terms of assembly, homodimer. Possesses two rubredoxin-like centers and two non-sulfur oxo-bridged di-iron centers per dimer. Requires Fe(3+) as cofactor.

The protein resides in the cytoplasm. May provide oxidative stress protection via catalytic reduction of intracellular hydrogen peroxide. This Nitratidesulfovibrio vulgaris (strain ATCC 29579 / DSM 644 / CCUG 34227 / NCIMB 8303 / VKM B-1760 / Hildenborough) (Desulfovibrio vulgaris) protein is Rubrerythrin (rbr).